The primary structure comprises 892 residues: Translation initiation factor IF-2 (892 aa).

The tract at residues 88–306 (KKRTFVKRDP…LQQGFQKPAQ (219 aa)) is disordered. Composition is skewed to basic and acidic residues over residues 93-159 (VKRD…KDKV) and 166-216 (DMIK…EENK). The span at 254 to 269 (GRGRNAKAARPAKKGK) shows a compositional bias: basic residues. The span at 270-282 (HAESKADREEARA) shows a compositional bias: basic and acidic residues. The 170-residue stretch at 391–560 (PRAPVVTIMG…LLQAEVLELK (170 aa)) folds into the tr-type G domain. The G1 stretch occupies residues 400 to 407 (GHVDHGKT). 400-407 (GHVDHGKT) lines the GTP pocket. Residues 425–429 (GITQH) are G2. The segment at 446-449 (DTPG) is G3. GTP contacts are provided by residues 446 to 450 (DTPGH) and 500 to 503 (NKID). Residues 500–503 (NKID) form a G4 region. Residues 536–538 (SAK) are G5.

The protein belongs to the TRAFAC class translation factor GTPase superfamily. Classic translation factor GTPase family. IF-2 subfamily.

It is found in the cytoplasm. In terms of biological role, one of the essential components for the initiation of protein synthesis. Protects formylmethionyl-tRNA from spontaneous hydrolysis and promotes its binding to the 30S ribosomal subunits. Also involved in the hydrolysis of GTP during the formation of the 70S ribosomal complex. This Salmonella schwarzengrund (strain CVM19633) protein is Translation initiation factor IF-2.